A 111-amino-acid chain; its full sequence is Ribosome-binding factor A (111 aa).

It belongs to the RbfA family. In terms of assembly, monomer. Binds 30S ribosomal subunits, but not 50S ribosomal subunits or 70S ribosomes.

Its subcellular location is the cytoplasm. Its function is as follows. One of several proteins that assist in the late maturation steps of the functional core of the 30S ribosomal subunit. Associates with free 30S ribosomal subunits (but not with 30S subunits that are part of 70S ribosomes or polysomes). Required for efficient processing of 16S rRNA. May interact with the 5'-terminal helix region of 16S rRNA. The polypeptide is Ribosome-binding factor A (Helicobacter acinonychis (strain Sheeba)).